Consider the following 106-residue polypeptide: UPF0145 protein PFL_3418 (106 aa).

The protein belongs to the UPF0145 family.

The chain is UPF0145 protein PFL_3418 from Pseudomonas fluorescens (strain ATCC BAA-477 / NRRL B-23932 / Pf-5).